Reading from the N-terminus, the 239-residue chain is Isoprenyl transferase (239 aa).

The active site involves Asp-16. Asp-16 serves as a coordination point for Mg(2+). Residues 17-20, Trp-21, Arg-29, His-33, and 61-63 each bind substrate; these read GNGR and STE. Asn-64 acts as the Proton acceptor in catalysis. Residues Trp-65, Arg-67, Arg-187, and 193 to 195 each bind substrate; that span reads RLS. Residue Glu-206 participates in Mg(2+) binding.

Belongs to the UPP synthase family. In terms of assembly, homodimer. It depends on Mg(2+) as a cofactor.

Its function is as follows. Catalyzes the condensation of isopentenyl diphosphate (IPP) with allylic pyrophosphates generating different type of terpenoids. This is Isoprenyl transferase from Lactobacillus johnsonii (strain CNCM I-12250 / La1 / NCC 533).